The sequence spans 513 residues: Serine/threonine-protein kinase UL13 homolog (513 aa).

Positions 1 to 27 (MDTESKNKKTTNGGENSNCSHSTRTPD) are disordered. Residues 10 to 23 (TTNGGENSNCSHST) show a composition bias toward polar residues. Residues 145–487 (KEMPIYAGSG…FDSLNIFPYL (343 aa)) form the Protein kinase domain. Residues 151-159 (AGSGSYGVV) and lysine 170 each bind ATP. Aspartate 268 acts as the Proton acceptor in catalysis.

The protein belongs to the protein kinase superfamily. Ser/Thr protein kinase family. Post-translationally, autophosphorylated.

The protein localises to the virion tegument. The protein resides in the host nucleus. It catalyses the reaction L-seryl-[protein] + ATP = O-phospho-L-seryl-[protein] + ADP + H(+). The catalysed reaction is L-threonyl-[protein] + ATP = O-phospho-L-threonyl-[protein] + ADP + H(+). In terms of biological role, multifunctional serine/threonine kinase that plays a role in several processes including egress of virus particles from the nucleus, modulation of the actin cytoskeleton and regulation of viral and cellular gene expression. This chain is Serine/threonine-protein kinase UL13 homolog (MDV025), found in Gallid herpesvirus 2 (strain Chicken/Md5/ATCC VR-987) (GaHV-2).